The primary structure comprises 441 residues: Glutamate--tRNA ligase 1 (441 aa).

The 'HIGH' region signature appears at 7 to 17; that stretch reads PSPTGYMHIGN. Residues 236–240 carry the 'KMSKS' region motif; it reads KMSKR. Position 239 (Lys-239) interacts with ATP.

It belongs to the class-I aminoacyl-tRNA synthetase family. Glutamate--tRNA ligase type 1 subfamily. In terms of assembly, monomer.

The protein localises to the cytoplasm. The catalysed reaction is tRNA(Glu) + L-glutamate + ATP = L-glutamyl-tRNA(Glu) + AMP + diphosphate. Its function is as follows. Catalyzes the attachment of glutamate to tRNA(Glu) in a two-step reaction: glutamate is first activated by ATP to form Glu-AMP and then transferred to the acceptor end of tRNA(Glu). The protein is Glutamate--tRNA ligase 1 of Anaplasma marginale (strain St. Maries).